The sequence spans 235 residues: tRNA (guanine-N(1)-)-methyltransferase (235 aa).

Residues glycine 112 and isoleucine 132 to isoleucine 137 each bind S-adenosyl-L-methionine.

Belongs to the RNA methyltransferase TrmD family. Homodimer.

It localises to the cytoplasm. The enzyme catalyses guanosine(37) in tRNA + S-adenosyl-L-methionine = N(1)-methylguanosine(37) in tRNA + S-adenosyl-L-homocysteine + H(+). In terms of biological role, specifically methylates guanosine-37 in various tRNAs. The protein is tRNA (guanine-N(1)-)-methyltransferase of Anaplasma marginale (strain Florida).